Consider the following 212-residue polypeptide: Uridine kinase (212 aa).

13–20 (GGSGSGKT) serves as a coordination point for ATP.

The protein belongs to the uridine kinase family.

It localises to the cytoplasm. The enzyme catalyses uridine + ATP = UMP + ADP + H(+). It carries out the reaction cytidine + ATP = CMP + ADP + H(+). The protein operates within pyrimidine metabolism; CTP biosynthesis via salvage pathway; CTP from cytidine: step 1/3. It functions in the pathway pyrimidine metabolism; UMP biosynthesis via salvage pathway; UMP from uridine: step 1/1. The polypeptide is Uridine kinase (Bacillus cytotoxicus (strain DSM 22905 / CIP 110041 / 391-98 / NVH 391-98)).